Consider the following 544-residue polypeptide: Chaperonin GroEL (544 aa).

ATP is bound by residues 30–33, K51, 87–91, G415, and D495; these read TLGP and DGTTT.

Belongs to the chaperonin (HSP60) family. In terms of assembly, forms a cylinder of 14 subunits composed of two heptameric rings stacked back-to-back. Interacts with the co-chaperonin GroES.

The protein localises to the cytoplasm. The enzyme catalyses ATP + H2O + a folded polypeptide = ADP + phosphate + an unfolded polypeptide.. Together with its co-chaperonin GroES, plays an essential role in assisting protein folding. The GroEL-GroES system forms a nano-cage that allows encapsulation of the non-native substrate proteins and provides a physical environment optimized to promote and accelerate protein folding. This Neisseria gonorrhoeae (strain ATCC 700825 / FA 1090) protein is Chaperonin GroEL.